A 125-amino-acid polypeptide reads, in one-letter code: Large ribosomal subunit protein bL17 (125 aa).

This sequence belongs to the bacterial ribosomal protein bL17 family. As to quaternary structure, part of the 50S ribosomal subunit. Contacts protein L32.

The polypeptide is Large ribosomal subunit protein bL17 (Blochmanniella pennsylvanica (strain BPEN)).